The sequence spans 223 residues: Rab-like protein 2A (223 aa).

GTP is bound by residues 28–35 (GDSAVGKS), 76–80 (DTAGQ), and 133–136 (NKID). A disordered region spans residues 200-223 (KLEQKEEDTSGQEQSDTTKSPSPS). Over residues 210–223 (GQEQSDTTKSPSPS) the composition is skewed to polar residues.

Belongs to the small GTPase superfamily. Rab family. As to quaternary structure, interacts with IFT27, IFT81, IFT172, ATP6V1E1, HK1, LDHC, MAPRE1 and HSPA2. As to expression, isoform 2 is expressed in the testis and localizes to the mid-piece of the sperm tail (at protein level). Isoform 2 is expressed at higher levels in testis than isoform 1. Isoform 1 and isoform 2 are widely expressed and notably within other tissues containing motile cilia including the lung, trachea, brain, ovary and kidney.

Functionally, plays an essential role in male fertility, sperm intra-flagellar transport, and tail assembly. Binds, in a GTP-regulated manner, to a specific set of effector proteins including key proteins involved in cilia development and function and delivers them into the growing sperm tail. The sequence is that of Rab-like protein 2A (Rabl2) from Mus musculus (Mouse).